The chain runs to 231 residues: Transmembrane protein 225 (231 aa).

Residues 1–13 (MVHILVRKVEATN) lie on the Cytoplasmic side of the membrane. The helical transmembrane segment at 14–34 (MFFSSWTLVFLAVGIIIEEWA) threads the bilayer. Residues 35–67 (ELKLGPQKPTITHSPWICCTPLWPSDGLEVIRN) lie on the Extracellular side of the membrane. A helical membrane pass occupies residues 68–88 (ILIVVLSLSFMHNLLLGFEFT). Topologically, residues 89–97 (YMIPQTKYT) are cytoplasmic. A helical transmembrane segment spans residues 98 to 118 (LIMTACLAFLTGILLLGALLL). Residues 119–135 (YHHMLRQGESVYYSSYK) lie on the Extracellular side of the membrane. A helical membrane pass occupies residues 136-156 (ISWIIFTAYLNVLFLFISGFL). The Cytoplasmic segment spans residues 157-231 (SLLQYKQPID…IQARRVTWAL (75 aa)). The RVxF motif lies at 225–229 (RRVTW).

Interacts (via RVxF motif) with PPP1CC.

It localises to the cytoplasmic vesicle. The protein localises to the secretory vesicle. It is found in the acrosome membrane. Functionally, probably inhibits protein phosphatase 1 (PP1) in sperm via binding to catalytic subunit PPP1CC. The protein is Transmembrane protein 225 (TMEM225) of Bos taurus (Bovine).